We begin with the raw amino-acid sequence, 118 residues long: Putative membrane protein insertion efficiency factor (118 aa).

The interval 76–118 is disordered; the sequence is WDPVPQRRPRRRDAAAADAAMSAPHACKGSPHAVVGDTNDGST. The span at 91–101 shows a compositional bias: low complexity; it reads AADAAMSAPHA.

It belongs to the UPF0161 family.

It localises to the cell membrane. In terms of biological role, could be involved in insertion of integral membrane proteins into the membrane. This chain is Putative membrane protein insertion efficiency factor, found in Nocardia farcinica (strain IFM 10152).